The chain runs to 224 residues: N-(5'-phosphoribosyl)anthranilate isomerase (224 aa).

The protein belongs to the TrpF family.

The enzyme catalyses N-(5-phospho-beta-D-ribosyl)anthranilate = 1-(2-carboxyphenylamino)-1-deoxy-D-ribulose 5-phosphate. The protein operates within amino-acid biosynthesis; L-tryptophan biosynthesis; L-tryptophan from chorismate: step 3/5. This Saccharomyces cerevisiae (strain ATCC 204508 / S288c) (Baker's yeast) protein is N-(5'-phosphoribosyl)anthranilate isomerase (TRP1).